Consider the following 367-residue polypeptide: Flagellar P-ring protein (367 aa).

Residues 1 to 18 (MFRALITALFCFSGLALA) form the signal peptide.

This sequence belongs to the FlgI family. The basal body constitutes a major portion of the flagellar organelle and consists of four rings (L,P,S, and M) mounted on a central rod.

Its subcellular location is the periplasm. It is found in the bacterial flagellum basal body. Assembles around the rod to form the L-ring and probably protects the motor/basal body from shearing forces during rotation. This chain is Flagellar P-ring protein, found in Rhizorhabdus wittichii (strain DSM 6014 / CCUG 31198 / JCM 15750 / NBRC 105917 / EY 4224 / RW1) (Sphingomonas wittichii).